Reading from the N-terminus, the 341-residue chain is uncharacterized protein (341 aa).

The stretch at 153-179 forms a coiled coil; sequence AYTLSEKVMNAEREAEETRETIIREAH. Over residues 319–335 the composition is skewed to polar residues; the sequence is EQLQNPAPESAPSTSKT. Positions 319–341 are disordered; it reads EQLQNPAPESAPSTSKTLRSKNP.

This is an uncharacterized protein from Coxiella burnetii (strain RSA 493 / Nine Mile phase I).